We begin with the raw amino-acid sequence, 372 residues long: uncharacterized protein (372 aa).

Composition is skewed to basic residues over residues 1–11 and 38–48; these read MNKILGLRRAK and RLRRGMQRLSR. Residues 1 to 127 are disordered; that stretch reads MNKILGLRRA…NSGTRDTPCW (127 aa). A compositionally biased stretch (basic and acidic residues) spans 50–61; it reads GYGDNRRSRGSE. Residues 93-104 show a composition bias toward polar residues; that stretch reads GKTSPCGSSGTP.

This is an uncharacterized protein from Psittacid herpesvirus 1 (isolate Amazon parrot/-/97-0001/1997) (PsHV-1).